We begin with the raw amino-acid sequence, 285 residues long: RNA exonuclease 4 (285 aa).

Polar residues predominate over residues M1–K14. The interval M1–K35 is disordered. Residues Y116–F267 enclose the Exonuclease domain.

The protein belongs to the REXO4 family.

The protein localises to the nucleus. Exoribonuclease involved in ribosome biosynthesis. Involved in the processing of ITS1, the internal transcribed spacer localized between the 18S and 5.8S rRNAs. In Candida albicans (strain SC5314 / ATCC MYA-2876) (Yeast), this protein is RNA exonuclease 4 (REX4).